Consider the following 346-residue polypeptide: Protein RecA (346 aa).

ATP is bound at residue 67–74 (GPESSGKT).

Belongs to the RecA family.

It localises to the cytoplasm. Can catalyze the hydrolysis of ATP in the presence of single-stranded DNA, the ATP-dependent uptake of single-stranded DNA by duplex DNA, and the ATP-dependent hybridization of homologous single-stranded DNAs. It interacts with LexA causing its activation and leading to its autocatalytic cleavage. In Saccharopolyspora erythraea (strain ATCC 11635 / DSM 40517 / JCM 4748 / NBRC 13426 / NCIMB 8594 / NRRL 2338), this protein is Protein RecA.